The following is a 563-amino-acid chain: Rab escort protein 1 (563 aa).

Positions 538–563 (ELFKEETSPAENTTEEENDGGVEIED) are disordered. Residues 550–563 (TTEEENDGGVEIED) are compositionally biased toward acidic residues.

It belongs to the Rab GDI family. Heterotrimer composed of the alpha subunit RGTA, the beta subunit RGTB and REP; within this trimer, RGTA and RGTB form the catalytic component, while REP mediates peptide substrate binding. In terms of tissue distribution, expressed in roots, leaves and flowers.

The protein localises to the cytoplasm. Its function is as follows. Substrate-binding subunit of the Rab geranylgeranyltransferase (GGTase) complex. Binds unprenylated Rab proteins and presents the substrate peptide to the catalytic component composed of the alpha subunit RGTA and the beta subunit RGTB. Preferentially binds the GDP-bound form of Rab and stimulates geranylgeranylation of various Rab GTPases in vitro. The chain is Rab escort protein 1 from Arabidopsis thaliana (Mouse-ear cress).